The primary structure comprises 287 residues: Mu-like prophage FluMu DNA transposition protein B (287 aa).

The region spanning 7 to 62 is the HTH cro/C1-type domain; the sequence is LKQHLSDSQITQAQLAREAGVNAGALSAYLNDNYKGNIADVEAKLAAYLEKKAVQA. A DNA-binding region (H-T-H motif) is located at residues 18 to 37; the sequence is QAQLAREAGVNAGALSAYLN. Residue 98-105 participates in ATP binding; the sequence is GMSGVGKT.

Functionally, this protein is a non-specific DNA-binding and ATP-hydrolyzing protein essential for bacteriophage integration and replication. The protein is Mu-like prophage FluMu DNA transposition protein B of Haemophilus influenzae (strain ATCC 51907 / DSM 11121 / KW20 / Rd).